Reading from the N-terminus, the 595-residue chain is Phenylalanine--tRNA ligase beta subunit (595 aa).

The interval 86 to 90 (KLSKP) is 3'-CCA residue in tRNA. The 79-residue stretch at 292 to 370 (FNDRIMDVSI…VGYGFNNLPK (79 aa)) folds into the B5 domain. Aspartate 348, aspartate 354, glutamate 357, and aspartate 358 together coordinate Mg(2+).

The protein belongs to the phenylalanyl-tRNA synthetase beta subunit family. Type 2 subfamily. As to quaternary structure, tetramer of two alpha and two beta subunits. Mg(2+) serves as cofactor.

The protein resides in the cytoplasm. It carries out the reaction tRNA(Phe) + L-phenylalanine + ATP = L-phenylalanyl-tRNA(Phe) + AMP + diphosphate + H(+). This Saccharomyces cerevisiae (strain ATCC 204508 / S288c) (Baker's yeast) protein is Phenylalanine--tRNA ligase beta subunit (FRS1).